A 277-amino-acid polypeptide reads, in one-letter code: Myelin proteolipid protein (277 aa).

Topologically, residues 2–9 (GLLECCAR) are cytoplasmic. Residues C6, C7, and C10 are each lipidated (S-palmitoyl cysteine). A helical transmembrane segment spans residues 10 to 36 (CLVGAPFASLVATGLCFFGVALFCGCG). Topologically, residues 37 to 63 (HEALTGTEKLIETYFSKNYQDYEYLIN) are extracellular. Residues 64–88 (VIHAFQYVIYGTASFFFLYGALLLA) traverse the membrane as a helical segment. Residues 89–151 (EGFYTTGAVR…LGKWLGHPDK (63 aa)) are Cytoplasmic-facing. Residue C109 is the site of S-palmitoyl cysteine attachment. Residue S114 is modified to Phosphoserine. Phosphothreonine is present on residues T116 and T118. 2 S-palmitoyl cysteine lipidation sites follow: C139 and C141. The chain crosses the membrane as a helical span at residues 152–177 (FVGITYALTVVWLLVFACSAVPVYIY). The Extracellular segment spans residues 178 to 233 (FNTWTTCQSIAFPSKTSASIGSLCADARMYGVLPWNAFPGKVCGSNLLSICKTAEF). Intrachain disulfides connect C184/C228 and C201/C220. The O-palmitoyl serine moiety is linked to residue S199. The helical transmembrane segment at 234 to 260 (QMTFHLFIAAFVGAAATLVSLLTFMIA) threads the bilayer. Topologically, residues 261-277 (ATYNFAVLKLMGRGTKF) are cytoplasmic.

This sequence belongs to the myelin proteolipid protein family. Interacts with MAL.

The protein resides in the cell membrane. It is found in the myelin membrane. Its function is as follows. This is the major myelin protein from the central nervous system. It plays an important role in the formation or maintenance of the multilamellar structure of myelin. In Mus musculus (Mouse), this protein is Myelin proteolipid protein (Plp1).